The following is a 468-amino-acid chain: RuvB-like helicase 2 (468 aa).

An ATP-binding site is contributed by Gly-76 to Thr-83.

It belongs to the RuvB family. In terms of assembly, may form heterododecamers with RVB1. Component of the SWR1 chromatin remodeling complex, the INO80 chromatin remodeling complex, and of the R2TP complex.

It localises to the nucleus. It catalyses the reaction ATP + H2O = ADP + phosphate + H(+). Functionally, DNA helicase which participates in several chromatin remodeling complexes, including the SWR1 and the INO80 complexes. The SWR1 complex mediates the ATP-dependent exchange of histone H2A for the H2A variant HZT1 leading to transcriptional regulation of selected genes by chromatin remodeling. The INO80 complex remodels chromatin by shifting nucleosomes and is involved in DNA repair. Also involved in pre-rRNA processing. This chain is RuvB-like helicase 2 (rvb2), found in Emericella nidulans (strain FGSC A4 / ATCC 38163 / CBS 112.46 / NRRL 194 / M139) (Aspergillus nidulans).